Here is a 1434-residue protein sequence, read N- to C-terminus: DNA-directed RNA polymerase subunit beta (1434 aa).

Belongs to the RNA polymerase beta chain family. The RNAP catalytic core consists of 2 alpha, 1 beta, 1 beta' and 1 omega subunit. When a sigma factor is associated with the core the holoenzyme is formed, which can initiate transcription.

The enzyme catalyses RNA(n) + a ribonucleoside 5'-triphosphate = RNA(n+1) + diphosphate. DNA-dependent RNA polymerase catalyzes the transcription of DNA into RNA using the four ribonucleoside triphosphates as substrates. This is DNA-directed RNA polymerase subunit beta from Ureaplasma urealyticum serovar 10 (strain ATCC 33699 / Western).